Reading from the N-terminus, the 1106-residue chain is Translation initiation factor IF-2 (1106 aa).

2 stretches are compositionally biased toward low complexity: residues 57–72 (GKAA…PDAG) and 81–97 (APST…SAPP). 2 disordered regions span residues 57-434 (GKAA…QKVH) and 466-497 (PSKP…RQRR). 2 stretches are compositionally biased toward pro residues: residues 113–123 (PAKPAPSAPPS) and 138–148 (PAKPAPSAPPS). A compositionally biased stretch (low complexity) spans 172–199 (AKPVAKPASAPAPARPAQPLRPQASNRP). 2 stretches are compositionally biased toward pro residues: residues 200-214 (PQQP…PAAK) and 223-235 (TAPP…PGAP). Composition is skewed to low complexity over residues 251 to 292 (PNQQ…QQRR), 319 to 329 (PQGRQGGAPSR), and 395 to 405 (YRPAAAPGMAG). A compositionally biased stretch (basic and acidic residues) spans 408-422 (RRPDWDDSARLDALR). A compositionally biased stretch (basic residues) spans 482–497 (ALRRRKKETTRQRQRR). The region spanning 598–771 (RRPPVVTVMG…LLVTEVEDLK (174 aa)) is the tr-type G domain. Residues 607 to 614 (GHVDHGKT) form a G1 region. 607–614 (GHVDHGKT) is a GTP binding site. The G2 stretch occupies residues 632–636 (GITQH). The segment at 657-660 (DTPG) is G3. Residues 657–661 (DTPGH) and 711–714 (NKVD) contribute to the GTP site. Residues 711 to 714 (NKVD) form a G4 region. The tract at residues 747-749 (SAL) is G5.

Belongs to the TRAFAC class translation factor GTPase superfamily. Classic translation factor GTPase family. IF-2 subfamily.

The protein resides in the cytoplasm. One of the essential components for the initiation of protein synthesis. Protects formylmethionyl-tRNA from spontaneous hydrolysis and promotes its binding to the 30S ribosomal subunits. Also involved in the hydrolysis of GTP during the formation of the 70S ribosomal complex. This Synechococcus sp. (strain RCC307) protein is Translation initiation factor IF-2.